The sequence spans 1104 residues: General transcription factor II-I repeat domain-containing protein 1 (1104 aa).

Glycyl lysine isopeptide (Lys-Gly) (interchain with G-Cter in SUMO2) cross-links involve residues lysine 27, lysine 184, lysine 212, lysine 225, lysine 238, lysine 271, lysine 337, lysine 436, lysine 439, and lysine 443. One copy of the GTF2I-like 1 repeat lies at 119–213; sequence LEQCSDVYLL…PDDGGQDTKA (95 aa). The stretch at 342–436 is one GTF2I-like 2 repeat; it reads IKEMEDINTL…FDERIFTGNK (95 aa). Serine 448 is modified (phosphoserine). The tract at residues 509-559 is disordered; sequence SDPSPTSEEMTDSLPGHLPSEDSGYGMEMPADKGPSEEPWSEERPAEESPG. Basic and acidic residues predominate over residues 538–555; it reads PADKGPSEEPWSEERPAE. The GTF2I-like 3 repeat unit spans residues 556–650; it reads ESPGDVIRPL…ELLTDGVKEP (95 aa). Glycyl lysine isopeptide (Lys-Gly) (interchain with G-Cter in SUMO2) cross-links involve residues lysine 567, lysine 579, lysine 588, lysine 622, lysine 638, lysine 669, lysine 709, lysine 717, lysine 757, lysine 759, and lysine 772. A GTF2I-like 4 repeat occupies 681–775; sequence LSRIDIANTL…FQGLIPKPET (95 aa). The tract at residues 783–802 is disordered; sequence EAGKTTRPRRLQQDTWQPDE. The stretch at 805 to 899 is one GTF2I-like 5 repeat; the sequence is ANRLGEKVIL…LQPFAEVCND (95 aa). Residues lysine 841 and lysine 901 each participate in a glycyl lysine isopeptide (Lys-Gly) (interchain with G-Cter in SUMO2) cross-link. One copy of the GTF2I-like 6 repeat lies at 908-1002; sequence SNKLGKKVIL…LQPFGDVCNN (95 aa). Disordered stretches follow at residues 1001-1044 and 1058-1104; these read NNAK…VAST and LHPN…LPTR. The short motif at 1012 to 1019 is the Nuclear localization signal element; that stretch reads PKRKRKRV. Positions 1021–1043 are enriched in low complexity; it reads EGNSVSSSSSSSSSSSNPESVAS.

Belongs to the TFII-I family. In terms of assembly, interacts with the retinoblastoma protein (RB1) via its C-terminus. Widely expressed.

The protein resides in the nucleus. Its function is as follows. May be a transcription regulator involved in cell-cycle progression and skeletal muscle differentiation. May repress GTF2I transcriptional functions, by preventing its nuclear residency, or by inhibiting its transcriptional activation. May contribute to slow-twitch fiber type specificity during myogenesis and in regenerating muscles. Binds troponin I slow-muscle fiber enhancer (USE B1). Binds specifically and with high affinity to the EFG sequences derived from the early enhancer of HOXC8. This Mus musculus (Mouse) protein is General transcription factor II-I repeat domain-containing protein 1 (Gtf2ird1).